The chain runs to 452 residues: Enolase (452 aa).

Residue Gln-167 participates in (2R)-2-phosphoglycerate binding. Glu-209 acts as the Proton donor in catalysis. Asp-250, Glu-310, and Asp-337 together coordinate Mg(2+). (2R)-2-phosphoglycerate contacts are provided by Lys-362, Arg-391, Ser-392, and Lys-413. Residue Lys-362 is the Proton acceptor of the active site.

This sequence belongs to the enolase family. Requires Mg(2+) as cofactor.

Its subcellular location is the cytoplasm. The protein resides in the secreted. The protein localises to the cell surface. The enzyme catalyses (2R)-2-phosphoglycerate = phosphoenolpyruvate + H2O. The protein operates within carbohydrate degradation; glycolysis; pyruvate from D-glyceraldehyde 3-phosphate: step 4/5. Its function is as follows. Catalyzes the reversible conversion of 2-phosphoglycerate (2-PG) into phosphoenolpyruvate (PEP). It is essential for the degradation of carbohydrates via glycolysis. In Mycoplasmopsis synoviae (strain 53) (Mycoplasma synoviae), this protein is Enolase.